The chain runs to 311 residues: Aspartate carbamoyltransferase catalytic subunit (311 aa).

Arg55 and Thr56 together coordinate carbamoyl phosphate. Lys85 provides a ligand contact to L-aspartate. Residues Arg106, His135, and Gln138 each coordinate carbamoyl phosphate. L-aspartate contacts are provided by Arg168 and Arg230. 2 residues coordinate carbamoyl phosphate: Leu268 and Pro269.

It belongs to the aspartate/ornithine carbamoyltransferase superfamily. ATCase family. In terms of assembly, heterododecamer (2C3:3R2) of six catalytic PyrB chains organized as two trimers (C3), and six regulatory PyrI chains organized as three dimers (R2).

It carries out the reaction carbamoyl phosphate + L-aspartate = N-carbamoyl-L-aspartate + phosphate + H(+). Its pathway is pyrimidine metabolism; UMP biosynthesis via de novo pathway; (S)-dihydroorotate from bicarbonate: step 2/3. Functionally, catalyzes the condensation of carbamoyl phosphate and aspartate to form carbamoyl aspartate and inorganic phosphate, the committed step in the de novo pyrimidine nucleotide biosynthesis pathway. The sequence is that of Aspartate carbamoyltransferase catalytic subunit from Salmonella paratyphi A (strain AKU_12601).